A 143-amino-acid chain; its full sequence is MIRKSKKITKMRGSRTCGYGEAKKHRGAGHRGGRGNAGHQKHKWLSVCKFNPDYFGKYGFNRNPGLIKQLETINIGELEEYILKYKDAFQVEDGKVVVDATEIGFEKVLGKGRISTAMVVKAVEFSEGAKEKIEAAGGEFVEL.

Basic residues-rich tracts occupy residues Met1 to Gly13 and Lys23 to Gly38. A disordered region spans residues Met1 to Gly38.

Belongs to the universal ribosomal protein uL15 family. In terms of assembly, part of the 50S ribosomal subunit.

Its function is as follows. Binds to the 23S rRNA. The protein is Large ribosomal subunit protein uL15 of Methanococcus maripaludis (strain C6 / ATCC BAA-1332).